The following is a 338-amino-acid chain: Elongation factor Ts, mitochondrial (338 aa).

A mitochondrion-targeting transit peptide spans Met-1–Lys-42.

The protein belongs to the EF-Ts family.

It localises to the mitochondrion. Associates with the EF-Tu.GDP complex and induces the exchange of GDP to GTP. It remains bound to the aminoacyl-tRNA.EF-Tu.GTP complex up to the GTP hydrolysis stage on the ribosome. This chain is Elongation factor Ts, mitochondrial, found in Ostreococcus tauri.